We begin with the raw amino-acid sequence, 122 residues long: Large ribosomal subunit protein uL18 (122 aa).

A compositionally biased stretch (basic residues) spans 1–21; it reads MSKLSRKQQTQKRHRRLRRHI. The tract at residues 1–25 is disordered; that stretch reads MSKLSRKQQTQKRHRRLRRHITGTS.

It belongs to the universal ribosomal protein uL18 family. As to quaternary structure, part of the 50S ribosomal subunit; part of the 5S rRNA/L5/L18/L25 subcomplex. Contacts the 5S and 23S rRNAs.

This is one of the proteins that bind and probably mediate the attachment of the 5S RNA into the large ribosomal subunit, where it forms part of the central protuberance. The polypeptide is Large ribosomal subunit protein uL18 (Synechococcus sp. (strain CC9902)).